The sequence spans 331 residues: 2-hydroxyacid dehydrogenase homolog (331 aa).

Residues 154 to 155 (KI), 232 to 234 (TSR), and D258 each bind NAD(+). R234 is a catalytic residue. E263 is an active-site residue. Residue H295 is the Proton donor of the active site. 295–298 (HQAF) serves as a coordination point for NAD(+).

This sequence belongs to the D-isomer specific 2-hydroxyacid dehydrogenase family.

This is 2-hydroxyacid dehydrogenase homolog (ddh) from Haemophilus influenzae (strain ATCC 51907 / DSM 11121 / KW20 / Rd).